Consider the following 384-residue polypeptide: S-adenosylmethionine synthase (384 aa).

His-15 is a binding site for ATP. Mg(2+) is bound at residue Asp-17. K(+) is bound at residue Glu-43. Glu-56 and Gln-99 together coordinate L-methionine. Positions 99 to 109 (QSPDINQGVDR) are flexible loop. ATP-binding positions include 164 to 166 (DAK), 230 to 231 (RF), Asp-239, 245 to 246 (RK), Ala-262, and Lys-266. Asp-239 serves as a coordination point for L-methionine. Residue Lys-270 participates in L-methionine binding.

The protein belongs to the AdoMet synthase family. Homotetramer; dimer of dimers. Mg(2+) is required as a cofactor. K(+) serves as cofactor.

The protein resides in the cytoplasm. The catalysed reaction is L-methionine + ATP + H2O = S-adenosyl-L-methionine + phosphate + diphosphate. It participates in amino-acid biosynthesis; S-adenosyl-L-methionine biosynthesis; S-adenosyl-L-methionine from L-methionine: step 1/1. In terms of biological role, catalyzes the formation of S-adenosylmethionine (AdoMet) from methionine and ATP. The overall synthetic reaction is composed of two sequential steps, AdoMet formation and the subsequent tripolyphosphate hydrolysis which occurs prior to release of AdoMet from the enzyme. The protein is S-adenosylmethionine synthase of Edwardsiella ictaluri (strain 93-146).